The primary structure comprises 382 residues: Histidinol-phosphate aminotransferase (382 aa).

At Lys-215 the chain carries N6-(pyridoxal phosphate)lysine. The segment at 363 to 382 is disordered; the sequence is NIDNQSKTHSQTSSIRKGTI.

This sequence belongs to the class-II pyridoxal-phosphate-dependent aminotransferase family. Histidinol-phosphate aminotransferase subfamily. In terms of assembly, homodimer. The cofactor is pyridoxal 5'-phosphate.

The catalysed reaction is L-histidinol phosphate + 2-oxoglutarate = 3-(imidazol-4-yl)-2-oxopropyl phosphate + L-glutamate. Its pathway is amino-acid biosynthesis; L-histidine biosynthesis; L-histidine from 5-phospho-alpha-D-ribose 1-diphosphate: step 7/9. The sequence is that of Histidinol-phosphate aminotransferase from Yersinia pseudotuberculosis serotype O:1b (strain IP 31758).